Here is a 319-residue protein sequence, read N- to C-terminus: Ribonuclease Z (319 aa).

Positions 62, 64, 66, 67, 145, 215, and 273 each coordinate Zn(2+). The active-site Proton acceptor is Asp66.

It belongs to the RNase Z family. In terms of assembly, homodimer. Zn(2+) is required as a cofactor.

It carries out the reaction Endonucleolytic cleavage of RNA, removing extra 3' nucleotides from tRNA precursor, generating 3' termini of tRNAs. A 3'-hydroxy group is left at the tRNA terminus and a 5'-phosphoryl group is left at the trailer molecule.. Its function is as follows. Zinc phosphodiesterase, which displays some tRNA 3'-processing endonuclease activity. Probably involved in tRNA maturation, by removing a 3'-trailer from precursor tRNA. In Borrelia duttonii (strain Ly), this protein is Ribonuclease Z.